Reading from the N-terminus, the 324-residue chain is HPr kinase/phosphorylase (324 aa).

Catalysis depends on residues His-146 and Lys-167. 161 to 168 provides a ligand contact to ATP; that stretch reads GDSGLGKS. Ser-168 serves as a coordination point for Mg(2+). Catalysis depends on Asp-185, which acts as the Proton acceptor; for phosphorylation activity. Proton donor; for dephosphorylation activity. The important for the catalytic mechanism of both phosphorylation and dephosphorylation stretch occupies residues 209–218; that stretch reads LEVRGLGLLD. Mg(2+) is bound at residue Glu-210. Arg-250 is a catalytic residue. Positions 271–276 are important for the catalytic mechanism of dephosphorylation; the sequence is QVAAGR.

This sequence belongs to the HPrK/P family. In terms of assembly, homohexamer. It depends on Mg(2+) as a cofactor.

It carries out the reaction [HPr protein]-L-serine + ATP = [HPr protein]-O-phospho-L-serine + ADP + H(+). The enzyme catalyses [HPr protein]-O-phospho-L-serine + phosphate + H(+) = [HPr protein]-L-serine + diphosphate. Catalyzes the ATP- as well as the pyrophosphate-dependent phosphorylation of a specific serine residue in HPr, a phosphocarrier protein of the phosphoenolpyruvate-dependent sugar phosphotransferase system (PTS). HprK/P also catalyzes the pyrophosphate-producing, inorganic phosphate-dependent dephosphorylation (phosphorolysis) of seryl-phosphorylated HPr (P-Ser-HPr). This Ralstonia pickettii (strain 12J) protein is HPr kinase/phosphorylase.